The sequence spans 100 residues: Small ribosomal subunit protein uS14c (100 aa).

It belongs to the universal ribosomal protein uS14 family. In terms of assembly, part of the 30S ribosomal subunit.

The protein resides in the plastid. It localises to the chloroplast. In terms of biological role, binds 16S rRNA, required for the assembly of 30S particles. The polypeptide is Small ribosomal subunit protein uS14c (Cicer arietinum (Chickpea)).